The sequence spans 502 residues: Putative F-box/FBD/LRR-repeat protein At5g22610 (502 aa).

The 47-residue stretch at 17–63 (EDLISKLPEVLLSQILSYLPTKDIVRTSVLSKRWKSVWLLIPGLDLD) folds into the F-box domain. LRR repeat units follow at residues 70–98 (YDTFVDFMNEFLFFSREENPCLHKLKLSI), 99–127 (QKNENDPSCVTLWTDCVARGKLQHLDVEF), 147–180 (CKTLLHLRLYRVLLGNFDQSVDSLPSLKSMCLEE), 181–206 (NVYSNEASLESLISSCRVLEDLTIVK), 208–228 (DDNVRFLRVHSQSLTSLSVGY), 238–263 (YYYDRDRGNSGLVIDAPRLKYLTFNN), and 344–373 (SVWLSSFDFLDILPKLLESCPNLKSIVLET). Positions 384-435 (VERRVSSVPECLLSSLEFVEIKNRISVDDGALEVARYFVENSVNLQKVVLRL) constitute an FBD domain.

This is Putative F-box/FBD/LRR-repeat protein At5g22610 from Arabidopsis thaliana (Mouse-ear cress).